Consider the following 432-residue polypeptide: Tryptophan--tRNA ligase (432 aa).

Residues 13-15 and 21-22 contribute to the ATP site; these read TTS and GN. Positions 14 to 22 match the 'HIGH' region motif; sequence TSGTPHLGN. Asp-146 serves as a coordination point for L-tryptophan. ATP is bound by residues 158–160, Leu-198, and 205–209; these read GRD and KMSKS. The short motif at 205–209 is the 'KMSKS' region element; it reads KMSKS.

The protein belongs to the class-I aminoacyl-tRNA synthetase family. In terms of assembly, homodimer.

It localises to the cytoplasm. It catalyses the reaction tRNA(Trp) + L-tryptophan + ATP = L-tryptophyl-tRNA(Trp) + AMP + diphosphate + H(+). In terms of biological role, catalyzes the attachment of tryptophan to tRNA(Trp). This chain is Tryptophan--tRNA ligase, found in Xanthomonas axonopodis pv. citri (strain 306).